Reading from the N-terminus, the 398-residue chain is NADH-quinone oxidoreductase subunit D (398 aa).

It belongs to the complex I 49 kDa subunit family. In terms of assembly, NDH-1 is composed of 14 different subunits. Subunits NuoB, C, D, E, F, and G constitute the peripheral sector of the complex.

It is found in the cell inner membrane. The catalysed reaction is a quinone + NADH + 5 H(+)(in) = a quinol + NAD(+) + 4 H(+)(out). Its function is as follows. NDH-1 shuttles electrons from NADH, via FMN and iron-sulfur (Fe-S) centers, to quinones in the respiratory chain. The immediate electron acceptor for the enzyme in this species is believed to be ubiquinone. Couples the redox reaction to proton translocation (for every two electrons transferred, four hydrogen ions are translocated across the cytoplasmic membrane), and thus conserves the redox energy in a proton gradient. In Bradyrhizobium sp. (strain BTAi1 / ATCC BAA-1182), this protein is NADH-quinone oxidoreductase subunit D.